A 358-amino-acid chain; its full sequence is Peptide chain release factor 1 (358 aa).

Q235 is modified (N5-methylglutamine). Residues 284 to 309 (KVESERSASRKSQVGSGDRSERIRTY) are disordered.

It belongs to the prokaryotic/mitochondrial release factor family. Post-translationally, methylated by PrmC. Methylation increases the termination efficiency of RF1.

It localises to the cytoplasm. In terms of biological role, peptide chain release factor 1 directs the termination of translation in response to the peptide chain termination codons UAG and UAA. This Bartonella tribocorum (strain CIP 105476 / IBS 506) protein is Peptide chain release factor 1.